The primary structure comprises 274 residues: NADPH-dependent 7-cyano-7-deazaguanine reductase (274 aa).

80 to 82 is a substrate binding site; sequence VES. 82-83 provides a ligand contact to NADPH; it reads SK. The active-site Thioimide intermediate is the cysteine 181. The active-site Proton donor is the aspartate 188. 220–221 serves as a coordination point for substrate; sequence HE. Position 249 to 250 (249 to 250) interacts with NADPH; the sequence is RG.

It belongs to the GTP cyclohydrolase I family. QueF type 2 subfamily. As to quaternary structure, homodimer.

It localises to the cytoplasm. It carries out the reaction 7-aminomethyl-7-carbaguanine + 2 NADP(+) = 7-cyano-7-deazaguanine + 2 NADPH + 3 H(+). It participates in tRNA modification; tRNA-queuosine biosynthesis. Its function is as follows. Catalyzes the NADPH-dependent reduction of 7-cyano-7-deazaguanine (preQ0) to 7-aminomethyl-7-deazaguanine (preQ1). This Paraburkholderia xenovorans (strain LB400) protein is NADPH-dependent 7-cyano-7-deazaguanine reductase.